The primary structure comprises 593 residues: Bifunctional lycopene cyclase/phytoene synthase (593 aa).

Residues 1–242 are lycopene beta-cyclase; it reads MAYDYALVHL…IVFGMAVFDQ (242 aa). 7 helical membrane-spanning segments follow: residues 8–28, 31–51, 77–97, 117–136, 147–167, 169–189, and 231–251; these read VHLKYTIPLAALLTVIAYPIF, IHFLQIGSLIVVSFLATLPWD, IEELFFFVIQTYITSLFYILL, IARGKVIGQGILVALTLYGV, YLGLILAWAFPFALLTFTVAG, FILTLPLTSTVVPIIIPTVYL, and ILIVFGMAVFDQYLAIIFAFP. The phytoene synthase stretch occupies residues 249-593; that stretch reads AFPHLFPKVP…KTVLKALFSA (345 aa).

This sequence in the N-terminal section; belongs to the lycopene beta-cyclase family. It in the C-terminal section; belongs to the phytoene/squalene synthase family.

Its subcellular location is the membrane. It catalyses the reaction all-trans-lycopene = gamma-carotene. It carries out the reaction gamma-carotene = all-trans-beta-carotene. The enzyme catalyses 2 (2E,6E,10E)-geranylgeranyl diphosphate = 15-cis-phytoene + 2 diphosphate. It functions in the pathway carotenoid biosynthesis; beta-carotene biosynthesis. The protein operates within carotenoid biosynthesis; phytoene biosynthesis; all-trans-phytoene from geranylgeranyl diphosphate: step 1/1. Bifunctional enzyme that catalyzes the reactions from geranylgeranyl diphosphate to phytoene (phytoene synthase) and lycopene to beta-carotene via the intermediate gamma-carotene (lycopene cyclase). This chain is Bifunctional lycopene cyclase/phytoene synthase, found in Podospora anserina (strain S / ATCC MYA-4624 / DSM 980 / FGSC 10383) (Pleurage anserina).